The primary structure comprises 727 residues: Catalase-peroxidase (727 aa).

The disordered stretch occupies residues Met1 to Arg26. The tryptophyl-tyrosyl-methioninium (Trp-Tyr) (with M-245) cross-link spans Trp97–Tyr219. His98 (proton acceptor) is an active-site residue. Residues Tyr219–Met245 constitute a cross-link (tryptophyl-tyrosyl-methioninium (Tyr-Met) (with W-97)). His260 lines the heme b pocket.

It belongs to the peroxidase family. Peroxidase/catalase subfamily. As to quaternary structure, homodimer or homotetramer. Heme b is required as a cofactor. Post-translationally, formation of the three residue Trp-Tyr-Met cross-link is important for the catalase, but not the peroxidase activity of the enzyme.

The enzyme catalyses H2O2 + AH2 = A + 2 H2O. It catalyses the reaction 2 H2O2 = O2 + 2 H2O. Its function is as follows. Bifunctional enzyme with both catalase and broad-spectrum peroxidase activity. The chain is Catalase-peroxidase from Allorhizobium ampelinum (strain ATCC BAA-846 / DSM 112012 / S4) (Agrobacterium vitis (strain S4)).